The following is a 162-amino-acid chain: Precorrin-2 dehydrogenase (162 aa).

Residues S20 to I21 and P41 to D42 each bind NAD(+).

Belongs to the precorrin-2 dehydrogenase / sirohydrochlorin ferrochelatase family.

It carries out the reaction precorrin-2 + NAD(+) = sirohydrochlorin + NADH + 2 H(+). It participates in cofactor biosynthesis; adenosylcobalamin biosynthesis; sirohydrochlorin from precorrin-2: step 1/1. Its pathway is porphyrin-containing compound metabolism; siroheme biosynthesis; sirohydrochlorin from precorrin-2: step 1/1. Functionally, catalyzes the dehydrogenation of precorrin-2 to form sirohydrochlorin which is used as a precursor in both siroheme biosynthesis and in the anaerobic branch of adenosylcobalamin biosynthesis. The sequence is that of Precorrin-2 dehydrogenase (sirC) from Bacillus subtilis (strain 168).